A 436-amino-acid chain; its full sequence is Trigger factor (436 aa).

A PPIase FKBP-type domain is found at 163–248 (GDRVTVDFEG…LKKIEAAHLP (86 aa)).

Belongs to the FKBP-type PPIase family. Tig subfamily.

Its subcellular location is the cytoplasm. The catalysed reaction is [protein]-peptidylproline (omega=180) = [protein]-peptidylproline (omega=0). Involved in protein export. Acts as a chaperone by maintaining the newly synthesized protein in an open conformation. Functions as a peptidyl-prolyl cis-trans isomerase. This chain is Trigger factor, found in Albidiferax ferrireducens (strain ATCC BAA-621 / DSM 15236 / T118) (Rhodoferax ferrireducens).